A 203-amino-acid polypeptide reads, in one-letter code: N-(5'-phosphoribosyl)anthranilate isomerase (203 aa).

Belongs to the TrpF family.

It carries out the reaction N-(5-phospho-beta-D-ribosyl)anthranilate = 1-(2-carboxyphenylamino)-1-deoxy-D-ribulose 5-phosphate. Its pathway is amino-acid biosynthesis; L-tryptophan biosynthesis; L-tryptophan from chorismate: step 3/5. The polypeptide is N-(5'-phosphoribosyl)anthranilate isomerase (Geobacter sulfurreducens (strain ATCC 51573 / DSM 12127 / PCA)).